The following is a 508-amino-acid chain: Photosystem II CP47 reaction center protein (508 aa).

Transmembrane regions (helical) follow at residues 21–36 (SVHI…WAGS), 101–115 (IVFS…IWHW), 140–156 (GIHL…FGAF), 203–218 (IAAG…FHLS), 237–252 (VLSS…AFVV), and 457–472 (SFAL…HGSR).

This sequence belongs to the PsbB/PsbC family. PsbB subfamily. In terms of assembly, PSII is composed of 1 copy each of membrane proteins PsbA, PsbB, PsbC, PsbD, PsbE, PsbF, PsbH, PsbI, PsbJ, PsbK, PsbL, PsbM, PsbT, PsbX, PsbY, PsbZ, Psb30/Ycf12, at least 3 peripheral proteins of the oxygen-evolving complex and a large number of cofactors. It forms dimeric complexes. Binds multiple chlorophylls. PSII binds additional chlorophylls, carotenoids and specific lipids. is required as a cofactor.

It is found in the plastid. Its subcellular location is the chloroplast thylakoid membrane. Functionally, one of the components of the core complex of photosystem II (PSII). It binds chlorophyll and helps catalyze the primary light-induced photochemical processes of PSII. PSII is a light-driven water:plastoquinone oxidoreductase, using light energy to abstract electrons from H(2)O, generating O(2) and a proton gradient subsequently used for ATP formation. This Draba nemorosa (Woodland whitlowgrass) protein is Photosystem II CP47 reaction center protein.